A 287-amino-acid polypeptide reads, in one-letter code: Large ribosomal subunit protein uL2 (287 aa).

Positions 221–287 (RGSVMNPCDH…SKRSRGGRDS (67 aa)) are disordered. Residues 258–287 (KTRKRNKPSNRFVLRKRRRTSKRSRGGRDS) are compositionally biased toward basic residues.

It belongs to the universal ribosomal protein uL2 family. As to quaternary structure, part of the 50S ribosomal subunit. Forms a bridge to the 30S subunit in the 70S ribosome.

In terms of biological role, one of the primary rRNA binding proteins. Required for association of the 30S and 50S subunits to form the 70S ribosome, for tRNA binding and peptide bond formation. It has been suggested to have peptidyltransferase activity; this is somewhat controversial. Makes several contacts with the 16S rRNA in the 70S ribosome. This is Large ribosomal subunit protein uL2 from Prochlorococcus marinus (strain MIT 9313).